Reading from the N-terminus, the 591-residue chain is Mono(ADP-ribosyl)transferase SpvB (591 aa).

Positions 373-576 (PMMGGNSSRP…LRLSDDATAD (204 aa)) constitute a TR mART core domain. Residues Arg414 and 471-477 (RGLKLDK) contribute to the NAD(+) site. Catalysis depends on residues Arg471, Ser501, and Glu538. Residue Glu538 participates in NAD(+) binding.

Belongs to the SpvB family.

It localises to the secreted. The enzyme catalyses L-arginyl-[protein] + NAD(+) = N(omega)-(ADP-D-ribosyl)-L-arginyl-[protein] + nicotinamide + H(+). Inhibited by novobiocin. Its function is as follows. Mono-ADP-ribosylates eukaryotic muscle and non-muscle actin on 'Arg-177'. ADP-ribosylates all actins tested, has more activity on nonmuscle beta/gamma-actin than on muscle alpha-actin. Prefers monomeric G-actin but can weakly ADP-ribosylate F-actin. ADP-ribosylation prevents the polymerization of G-actin to F-actin, causing actin filament depolymerization, destruction of the cytoskeleton and cytotoxicity. Does not possess NAD(+)-glycohydrolase activity, unlike most mART enzymes. This Salmonella typhimurium protein is Mono(ADP-ribosyl)transferase SpvB (spvB).